The sequence spans 434 residues: Enolase (434 aa).

A (2R)-2-phosphoglycerate-binding site is contributed by Q165. E207 functions as the Proton donor in the catalytic mechanism. Mg(2+) is bound by residues D244, E291, and D318. (2R)-2-phosphoglycerate is bound by residues K343, R372, S373, and K394. The active-site Proton acceptor is the K343.

This sequence belongs to the enolase family. The cofactor is Mg(2+).

Its subcellular location is the cytoplasm. The protein resides in the secreted. It localises to the cell surface. It catalyses the reaction (2R)-2-phosphoglycerate = phosphoenolpyruvate + H2O. It participates in carbohydrate degradation; glycolysis; pyruvate from D-glyceraldehyde 3-phosphate: step 4/5. In terms of biological role, catalyzes the reversible conversion of 2-phosphoglycerate (2-PG) into phosphoenolpyruvate (PEP). It is essential for the degradation of carbohydrates via glycolysis. The sequence is that of Enolase from Staphylococcus aureus (strain USA300 / TCH1516).